A 175-amino-acid polypeptide reads, in one-letter code: MSSAVGKRYARALFEVASERSKIDQVEADLGAIVEAVEGNEDLKKIMLHPHIAADAKATLADELFKSHVGEEAFNFLNVLIENGREVDLVDIYRSFVQLANEARGFADAIVTSAKPLSTEEQNELAEKFGQTLNKKLRMTAVVDPAILGGVIIKIGDRLYDGSLKTKLETFAQKA.

This sequence belongs to the ATPase delta chain family. F-type ATPases have 2 components, F(1) - the catalytic core - and F(0) - the membrane proton channel. F(1) has five subunits: alpha(3), beta(3), gamma(1), delta(1), epsilon(1). F(0) has three main subunits: a(1), b(2) and c(10-14). The alpha and beta chains form an alternating ring which encloses part of the gamma chain. F(1) is attached to F(0) by a central stalk formed by the gamma and epsilon chains, while a peripheral stalk is formed by the delta and b chains.

The protein localises to the cell membrane. Functionally, f(1)F(0) ATP synthase produces ATP from ADP in the presence of a proton or sodium gradient. F-type ATPases consist of two structural domains, F(1) containing the extramembraneous catalytic core and F(0) containing the membrane proton channel, linked together by a central stalk and a peripheral stalk. During catalysis, ATP synthesis in the catalytic domain of F(1) is coupled via a rotary mechanism of the central stalk subunits to proton translocation. Its function is as follows. This protein is part of the stalk that links CF(0) to CF(1). It either transmits conformational changes from CF(0) to CF(1) or is implicated in proton conduction. The protein is ATP synthase subunit delta of Brevibacillus brevis (strain 47 / JCM 6285 / NBRC 100599).